Consider the following 117-residue polypeptide: NADH-ubiquinone oxidoreductase chain 3 (117 aa).

3 consecutive transmembrane segments (helical) span residues 4–24 (IIFI…LASI), 60–80 (ITII…MIII), and 86–106 (IMIW…GLYH).

It belongs to the complex I subunit 3 family.

The protein localises to the mitochondrion membrane. The enzyme catalyses a ubiquinone + NADH + 5 H(+)(in) = a ubiquinol + NAD(+) + 4 H(+)(out). In terms of biological role, core subunit of the mitochondrial membrane respiratory chain NADH dehydrogenase (Complex I) that is believed to belong to the minimal assembly required for catalysis. Complex I functions in the transfer of electrons from NADH to the respiratory chain. The immediate electron acceptor for the enzyme is believed to be ubiquinone. The chain is NADH-ubiquinone oxidoreductase chain 3 (mt:ND3) from Drosophila melanogaster (Fruit fly).